Reading from the N-terminus, the 541-residue chain is Glucose-6-phosphate isomerase (541 aa).

Glu-354 acts as the Proton donor in catalysis. Catalysis depends on residues His-385 and Lys-505.

The protein belongs to the GPI family.

The protein localises to the cytoplasm. It catalyses the reaction alpha-D-glucose 6-phosphate = beta-D-fructose 6-phosphate. Its pathway is carbohydrate biosynthesis; gluconeogenesis. The protein operates within carbohydrate degradation; glycolysis; D-glyceraldehyde 3-phosphate and glycerone phosphate from D-glucose: step 2/4. In terms of biological role, catalyzes the reversible isomerization of glucose-6-phosphate to fructose-6-phosphate. In Cupriavidus metallidurans (strain ATCC 43123 / DSM 2839 / NBRC 102507 / CH34) (Ralstonia metallidurans), this protein is Glucose-6-phosphate isomerase.